The following is a 496-amino-acid chain: Lysine--tRNA ligase (496 aa).

2 residues coordinate Mg(2+): E409 and E416.

Belongs to the class-II aminoacyl-tRNA synthetase family. As to quaternary structure, homodimer. The cofactor is Mg(2+).

Its subcellular location is the cytoplasm. It catalyses the reaction tRNA(Lys) + L-lysine + ATP = L-lysyl-tRNA(Lys) + AMP + diphosphate. This Streptococcus pneumoniae serotype 19F (strain G54) protein is Lysine--tRNA ligase.